The chain runs to 222 residues: Prolactin-2C5 (222 aa).

The first 29 residues, 1–29, serve as a signal peptide directing secretion; sequence MLPSLIQPCSWILLLLLVNSSLLWKNVAS. Cys-33 and Cys-40 are oxidised to a cystine. N-linked (GlcNAc...) asparagine glycosylation is present at Asn-57. Disulfide bonds link Cys-87-Cys-197 and Cys-214-Cys-222.

The protein belongs to the somatotropin/prolactin family. In terms of processing, N-glycosylated and sialylated. Expressed in placenta (at protein level). Expressed in the tail hair follicle, with highest expression detected in the keratinocytes of the outer root sheath. Expressed in ear skin with lesser amounts in small intestine. Not detected in brain at 18 dpc, postnatal day 25 or postnatal day 55.

Its subcellular location is the secreted. The chain is Prolactin-2C5 from Mus musculus (Mouse).